The primary structure comprises 239 residues: Leucyl/phenylalanyl-tRNA--protein transferase (239 aa).

This sequence belongs to the L/F-transferase family.

The protein resides in the cytoplasm. It carries out the reaction N-terminal L-lysyl-[protein] + L-leucyl-tRNA(Leu) = N-terminal L-leucyl-L-lysyl-[protein] + tRNA(Leu) + H(+). The enzyme catalyses N-terminal L-arginyl-[protein] + L-leucyl-tRNA(Leu) = N-terminal L-leucyl-L-arginyl-[protein] + tRNA(Leu) + H(+). It catalyses the reaction L-phenylalanyl-tRNA(Phe) + an N-terminal L-alpha-aminoacyl-[protein] = an N-terminal L-phenylalanyl-L-alpha-aminoacyl-[protein] + tRNA(Phe). In terms of biological role, functions in the N-end rule pathway of protein degradation where it conjugates Leu, Phe and, less efficiently, Met from aminoacyl-tRNAs to the N-termini of proteins containing an N-terminal arginine or lysine. The chain is Leucyl/phenylalanyl-tRNA--protein transferase from Syntrophus aciditrophicus (strain SB).